The following is a 281-amino-acid chain: Radiation response metalloprotease IrrE (281 aa).

His-82 contacts Zn(2+). The active site involves Glu-83. Zn(2+) contacts are provided by His-86 and Glu-113. Residues 262–281 (LPAGRSEPDADKPEAPGDQS) are disordered. The segment covering 267 to 281 (SEPDADKPEAPGDQS) has biased composition (basic and acidic residues).

In terms of assembly, interacts with DdrOC.

Its activity is regulated as follows. Protease activity is inhibited by EDTA. Plays a central regulatory role in DNA repair and protection pathways in response to radiation stress. Acts as a site-specific metalloprotease that cleaves and inactivates the repressor proteins DdrOC and DdrOP3, resulting in induced expression of genes required for DNA repair and cell survival after exposure to radiation. This chain is Radiation response metalloprotease IrrE, found in Deinococcus deserti (strain DSM 17065 / CIP 109153 / LMG 22923 / VCD115).